A 102-amino-acid chain; its full sequence is Class II hydrophobin 3 (102 aa).

An N-terminal signal peptide occupies residues 1–16 (MQFLAVAALLFTTALA). 4 cysteine pairs are disulfide-bonded: Cys33-Cys83, Cys44-Cys74, Cys45-Cys57, and Cys84-Cys95.

It belongs to the cerato-ulmin hydrophobin family. In terms of assembly, homotetramer. Further self-assembles to form highly ordered films at water-air interfaces through intermolecular interactions. As to expression, expressed in the conidia, vegetative growth and induction growth stages.

The protein localises to the secreted. Its subcellular location is the cell wall. The protein resides in the cytoplasm. Its function is as follows. Aerial growth, conidiation, and dispersal of filamentous fungi in the environment rely upon a capability of their secreting small amphipathic proteins called hydrophobins (HPBs) with low sequence identity. Class I can self-assemble into an outermost layer of rodlet bundles on aerial cell surfaces, conferring cellular hydrophobicity that supports fungal growth, development and dispersal; whereas Class II form highly ordered films at water-air interfaces through intermolecular interactions but contribute nothing to the rodlet structure. Hbf3 is a class II hydrophobin that has a role in vegetative growth and asexual development. The protein is Class II hydrophobin 3 of Hypocrea jecorina (strain QM6a) (Trichoderma reesei).